The following is a 159-amino-acid chain: Phosphopantetheine adenylyltransferase (159 aa).

A substrate-binding site is contributed by Ser-9. ATP-binding positions include 9–10 (SF) and His-17. Residues Lys-41, Leu-73, and Arg-87 each contribute to the substrate site. ATP-binding positions include 88-90 (GLR), Glu-98, and 123-129 (YSYVSSS).

The protein belongs to the bacterial CoaD family. As to quaternary structure, homohexamer. Mg(2+) is required as a cofactor.

The protein localises to the cytoplasm. The enzyme catalyses (R)-4'-phosphopantetheine + ATP + H(+) = 3'-dephospho-CoA + diphosphate. It participates in cofactor biosynthesis; coenzyme A biosynthesis; CoA from (R)-pantothenate: step 4/5. Functionally, reversibly transfers an adenylyl group from ATP to 4'-phosphopantetheine, yielding dephospho-CoA (dPCoA) and pyrophosphate. The sequence is that of Phosphopantetheine adenylyltransferase from Shouchella clausii (strain KSM-K16) (Alkalihalobacillus clausii).